The primary structure comprises 249 residues: tRNA (guanine-N(1)-)-methyltransferase (249 aa).

S-adenosyl-L-methionine-binding positions include Gly113 and 132–137; that span reads VGDFVV.

Belongs to the RNA methyltransferase TrmD family. In terms of assembly, homodimer.

The protein resides in the cytoplasm. It catalyses the reaction guanosine(37) in tRNA + S-adenosyl-L-methionine = N(1)-methylguanosine(37) in tRNA + S-adenosyl-L-homocysteine + H(+). In terms of biological role, specifically methylates guanosine-37 in various tRNAs. The sequence is that of tRNA (guanine-N(1)-)-methyltransferase from Desulforudis audaxviator (strain MP104C).